The chain runs to 398 residues: Tryptophan synthase beta chain (398 aa).

Lys-92 is subject to N6-(pyridoxal phosphate)lysine.

This sequence belongs to the TrpB family. As to quaternary structure, tetramer of two alpha and two beta chains. The cofactor is pyridoxal 5'-phosphate.

The enzyme catalyses (1S,2R)-1-C-(indol-3-yl)glycerol 3-phosphate + L-serine = D-glyceraldehyde 3-phosphate + L-tryptophan + H2O. It participates in amino-acid biosynthesis; L-tryptophan biosynthesis; L-tryptophan from chorismate: step 5/5. Functionally, the beta subunit is responsible for the synthesis of L-tryptophan from indole and L-serine. This Nitrosospira multiformis (strain ATCC 25196 / NCIMB 11849 / C 71) protein is Tryptophan synthase beta chain.